The primary structure comprises 687 residues: Ferric vibriobactin receptor ViuA (687 aa).

The N-terminal stretch at 1 to 37 (MAVLCPARVSVAENKKFKLHTLSAMMMGLFTGSFAYA) is a signal peptide. The 123-residue stretch at 62–184 (SIYETSASVE…SAGAIVMKSN (123 aa)) folds into the TBDR plug domain. The TBDR beta-barrel domain maps to 189–687 (HFESAVKAGI…MIGASVQLNF (499 aa)).

It belongs to the TonB-dependent receptor family.

Its subcellular location is the cell outer membrane. Involved in the uptake of iron in complex with vibriobactin, a catecholate siderophore synthesized by V.cholerae. Binds and transports ferric vibriobactin across the outer membrane. The energy source is provided by the inner membrane TonB system. This is Ferric vibriobactin receptor ViuA from Vibrio cholerae serotype O1 (strain ATCC 39541 / Classical Ogawa 395 / O395).